A 222-amino-acid chain; its full sequence is Polyadenylate-binding protein 2 (222 aa).

The tract at residues 1–43 (MTDNNNGEIVEDKDNEKLKGEDNINNHISNHNNTEETSFEDPE) is disordered. Residues 10–24 (VEDKDNEKLKGEDNI) are compositionally biased toward basic and acidic residues. The RRM domain maps to 101 to 178 (RSVYVGNVDY…RQLKITPKRT (78 aa)).

The protein resides in the nucleus. Involved in the 3'-end formation of mRNA precursors (pre-mRNA) by the addition of a poly(A) tail of 200-250 nt to the upstream cleavage product. This chain is Polyadenylate-binding protein 2 (pabpn1), found in Dictyostelium discoideum (Social amoeba).